The following is a 461-amino-acid chain: Zinc transporter 6 (461 aa).

The Cytoplasmic portion of the chain corresponds to Met1 to Lys33. A helical membrane pass occupies residues Ile34 to Ser54. Over Thr55–Thr64 the chain is Extracellular. A helical transmembrane segment spans residues Tyr65–Leu85. At Arg86–Arg98 the chain is on the cytoplasmic side. A helical transmembrane segment spans residues Leu99–Leu119. Residues Lys120 to Thr134 lie on the Extracellular side of the membrane. The helical transmembrane segment at Gly135 to Ile155 threads the bilayer. Over Arg156–Pro200 the chain is Cytoplasmic. A helical membrane pass occupies residues Phe201–Ile221. Topologically, residues Asn222–Asn223 are extracellular. A helical transmembrane segment spans residues Tyr224–Tyr244. Residues Pro245 to Pro461 are Cytoplasmic-facing. A disordered region spans residues Asn371 to Pro392.

This sequence belongs to the cation diffusion facilitator (CDF) transporter (TC 2.A.4) family. SLC30A subfamily. In terms of assembly, heterodimer with SLC30A5; form a functional zinc ion transmembrane transporter. In terms of tissue distribution, expressed in brain; especially in cerebellum, hippocampus, parahippocampal gyrus, superior and middle temporal gyrus. Also expressed in B-cells, colon, eye, and lung. Lower expression was present in bone, brain, cervix, ear, heart, kidney, muscle, nerve, pancreas, prostate, skin, stomach, and testis.

The protein localises to the golgi apparatus. It localises to the trans-Golgi network membrane. Has probably no intrinsic transporter activity but together with SLC30A5 forms a functional zinc ion:proton antiporter heterodimer, mediating zinc entry into the lumen of organelles along the secretory pathway. As part of that zinc ion:proton antiporter, contributes to zinc ion homeostasis within the early secretory pathway and regulates the activation and folding of enzymes like alkaline phosphatases and enzymes involved in phosphatidylinositol glycan anchor biosynthesis. The polypeptide is Zinc transporter 6 (Homo sapiens (Human)).